The primary structure comprises 477 residues: Otolin-1 (477 aa).

Positions 1–23 are cleaved as a signal peptide; it reads MWMFSWLCAILIILAIAGMNTIA. Disordered regions lie at residues 28–55 and 111–337; these read HTKF…PEEE and QKGE…KGEL. Residues 33 to 42 show a composition bias toward basic and acidic residues; the sequence is KKSEEREMPK. The Collagen-like 1 domain occupies 116-175; sequence GETGQPGPKGEAGNLGIPGPPGVVGPQGPRGYKGEKGLKGERGDQGVPGYPGKPGAQGEP. Residues proline 133 and proline 136 each carry the hydroxyproline modification. The segment covering 147–159 has biased composition (basic and acidic residues); the sequence is YKGEKGLKGERGD. 3 positions are modified to hydroxyproline: proline 163, proline 166, and proline 169. Residue lysine 178 is modified to 5-hydroxylysine. O-linked (Gal...) hydroxylysine glycosylation occurs at lysine 178. Over residues 182–191 the composition is skewed to gly residues; it reads GNIGLGGVKG. N-linked (GlcNAc...) asparagine glycosylation is present at asparagine 202. Collagen-like domains are found at residues 209–268 and 278–337; these read GDQG…KGSK and GRNG…KGEL. At proline 223 the chain carries Hydroxyproline. Basic and acidic residues-rich tracts occupy residues 226 to 240 and 247 to 277; these read KGEK…EMGD and SGER…EGKS. Residues proline 283 and proline 301 each carry the hydroxyproline modification. The segment covering 298 to 310 has biased composition (low complexity); that stretch reads LGPPGLLGPTGPK. 5-hydroxylysine is present on lysine 310. The O-linked (Gal...) hydroxylysine glycan is linked to lysine 310. The C1q domain occupies 338 to 473; the sequence is ARVPRSAFSA…GFLLYPEETS (136 aa). An N-linked (GlcNAc...) asparagine glycan is attached at asparagine 381.

It belongs to the OTOL1 family. Homooligomer; disulfide-linked; probably forms homotrimers. Interacts with OC90. Interacts with CBLN1.

The protein resides in the secreted. The protein localises to the extracellular space. Its subcellular location is the extracellular matrix. In terms of biological role, collagen-like protein specifically expressed in the inner ear, which provides an organic scaffold for otoconia, a calcium carbonate structure in the saccule and utricle of the ear. Acts as a scaffold for biomineralization: sequesters calcium and forms interconnecting fibrils between otoconia that are incorporated into the calcium crystal structure. Together with OC90, modulates calcite crystal morphology and growth kinetics. The sequence is that of Otolin-1 from Homo sapiens (Human).